The chain runs to 146 residues: Keratin-associated protein 4-1 (146 aa).

A run of 18 repeats spans residues 5–9 (CCGSV), 24–28 (CCRPS), 29–33 (CCQTT), 34–38 (CCCPS), 44–48 (CCRPS), 54–58 (CCQTT), 59–63 (CCRPS), 64–68 (CCHPV), 69–73 (CCQTT), 83–87 (CCRPL), 88–92 (CCQTT), 102–106 (CCRPL), 107–111 (CCQTT), 121–125 (CCRPL), 126–130 (CCQTT), 131–135 (CCRAT), 136–140 (CCRPS), and 141–145 (CCGSS). The segment at 5–145 (CCGSVCSDQG…CCRPSCCGSS (141 aa)) is 18 X 5 AA repeats of C-C-[GRQC]-[SPT]-[VSTL].

Belongs to the KRTAP type 4 family. Interacts with hair keratins. As to expression, expressed in the hair follicles.

Functionally, in the hair cortex, hair keratin intermediate filaments are embedded in an interfilamentous matrix, consisting of hair keratin-associated proteins (KRTAP), which are essential for the formation of a rigid and resistant hair shaft through their extensive disulfide bond cross-linking with abundant cysteine residues of hair keratins. The matrix proteins include the high-sulfur and high-glycine-tyrosine keratins. This chain is Keratin-associated protein 4-1 (KRTAP4-1), found in Homo sapiens (Human).